The sequence spans 234 residues: tRNA (guanine-N(1)-)-methyltransferase (234 aa).

S-adenosyl-L-methionine-binding positions include glycine 115 and 135-140; that span reads VGDYIL.

It belongs to the RNA methyltransferase TrmD family. In terms of assembly, homodimer.

The protein resides in the cytoplasm. It carries out the reaction guanosine(37) in tRNA + S-adenosyl-L-methionine = N(1)-methylguanosine(37) in tRNA + S-adenosyl-L-homocysteine + H(+). In terms of biological role, specifically methylates guanosine-37 in various tRNAs. The chain is tRNA (guanine-N(1)-)-methyltransferase from Rickettsia africae (strain ESF-5).